A 143-amino-acid polypeptide reads, in one-letter code: Peptide methionine sulfoxide reductase MsrB (143 aa).

The MsrB domain occupies 5-127; the sequence is KEKRLKELNR…NSAALKFIPK (123 aa). The active-site Nucleophile is C116.

Belongs to the MsrB Met sulfoxide reductase family.

It carries out the reaction L-methionyl-[protein] + [thioredoxin]-disulfide + H2O = L-methionyl-(R)-S-oxide-[protein] + [thioredoxin]-dithiol. This chain is Peptide methionine sulfoxide reductase MsrB, found in Bacillus pumilus (strain SAFR-032).